The primary structure comprises 855 residues: Oxysterol-binding protein-related protein 3 (855 aa).

The tract at residues methionine 1 to aspartate 32 is disordered. Residues serine 15 and serine 33 each carry the phosphoserine modification. Low complexity predominate over residues serine 15 to glutamine 31. Positions proline 50–methionine 145 constitute a PH domain. An FFAT 1 motif is present at residues phenylalanine 161–valine 167. A phosphoserine mark is found at serine 199, serine 250, serine 272, serine 277, serine 288, serine 291, serine 340, serine 393, serine 405, and serine 408. The tract at residues proline 274–alanine 293 is disordered. A disordered region spans residues aspartate 377–glutamate 396. An FFAT 2 motif is present at residues leucine 450–asparagine 454. The disordered stretch occupies residues proline 468–asparagine 490.

Belongs to the OSBP family. As to quaternary structure, homodimer. Interacts with RRAS. Interacts (phosphorylated form) with VAPA. Interacts with OSBPL6. Post-translationally, phosphorylation is enhanced in vitro by phorbol-12-myristate-13-acetate (PMA), forskolin and calcium ionophore A23187. Phosphorylation seems to be stimulated in conditions of low cell-cell (or cell-matrix) adhesion. Expressed in spinal ganglia. Expressed in a subset of small lymphocytes (at protein level).

The protein resides in the endoplasmic reticulum membrane. Its subcellular location is the cytoplasm. It localises to the cytosol. It is found in the cell membrane. The protein localises to the cell projection. The protein resides in the filopodium tip. Its subcellular location is the nucleus membrane. Its function is as follows. Phosphoinositide-binding protein which associates with both cell and endoplasmic reticulum (ER) membranes. Can bind to the ER membrane protein VAPA and recruit VAPA to plasma membrane sites, thus linking these intracellular compartments. The ORP3-VAPA complex stimulates RRAS signaling which in turn attenuates integrin beta-1 (ITGB1) activation at the cell surface. With VAPA, may regulate ER morphology. Has a role in regulation of the actin cytoskeleton, cell polarity and cell adhesion. Binds to phosphoinositides with preference for PI(3,4)P2 and PI(3,4,5)P3. Also binds 25-hydroxycholesterol and cholesterol. This is Oxysterol-binding protein-related protein 3 (Osbpl3) from Mus musculus (Mouse).